A 218-amino-acid chain; its full sequence is Small ribosomal subunit protein uS3 (218 aa).

In terms of domain architecture, KH type-2 spans 38–106 (IREFISKRLS…RVHINILEIK (69 aa)).

This sequence belongs to the universal ribosomal protein uS3 family. As to quaternary structure, part of the 30S ribosomal subunit. Forms a tight complex with proteins S10 and S14.

Binds the lower part of the 30S subunit head. Binds mRNA in the 70S ribosome, positioning it for translation. This chain is Small ribosomal subunit protein uS3, found in Bacillus pumilus (strain SAFR-032).